A 395-amino-acid chain; its full sequence is MDGGSGQPAADTEMTEAPGGFPAAAPSPQMPGIENIPATLSHGGRFIQYNIFGNIFEVTAKYKPPIMPIGKGAYGIVCSAMNSETNESVAIKKIANAFDNKIDAKRTLREIKLLRHMDHENIVAIRDIIPPPLRNAFNDVYIAYELMDTDLHQIIRSNQALSEEHCQYFLYQILRGLKYIHSANVLHRDLKPSNLLLNANCDLKICDFGLARVTSESDFMTEYVVTRWYRAPELLLNSSDYTAAIDVWSVGCIFMELMDRKPLFPGRDHVHQLRLLMELIGTPSEEELEFLNENAKRYIRQLPPYPRQSITDKFPTVHPLAIDLIEKMLTFDPRRRITVLDALAHPYLNSLHDISDEPECTIPFNFDFENHALSEEQMKELIYREALAFNPEYQQ.

A disordered region spans residues 1–35; the sequence is MDGGSGQPAADTEMTEAPGGFPAAAPSPQMPGIEN. Low complexity predominate over residues 17 to 27; sequence APGGFPAAAPS. One can recognise a Protein kinase domain in the interval 63-348; it reads KPPIMPIGKG…VLDALAHPYL (286 aa). Residues 69–77 and Lys92 each bind ATP; that span reads IGKGAYGIV. The active-site Proton acceptor is Asp189. Thr221 is subject to Phosphothreonine. The short motif at 221 to 223 is the TXY element; the sequence is TEY. Tyr223 carries the phosphotyrosine modification. A Phosphothreonine modification is found at Thr226.

Belongs to the protein kinase superfamily. CMGC Ser/Thr protein kinase family. MAP kinase subfamily. As to quaternary structure, interacts with MEKK1, MKK1 and MKK2. May form a ternary complex with MEKK1 and MKK1 or MKK2. Interacts with NDPK2, AP2C1, MKP1 and PTP1. Interacts with DSPTP1B/MKP2, especially during HR-like responses triggered by fungal elicitors. Interacts with MKK4, MKK5 and MKK6. Binds to LIP5. Interacts with VQ4 and IKU1/VQ14. Interacts with RACK1A, RACK1B and RACK1C. Interacts with PTP1. Interacts with FLZ9. Binds to BASL and YDA. Post-translationally, dually phosphorylated on Thr-221 and Tyr-223, which activates the enzyme. Dephosphorylated by DSPTP1B/MKP2.

It is found in the cytoplasm. The protein resides in the nucleus. It localises to the cell cortex. It catalyses the reaction L-seryl-[protein] + ATP = O-phospho-L-seryl-[protein] + ADP + H(+). The enzyme catalyses L-threonyl-[protein] + ATP = O-phospho-L-threonyl-[protein] + ADP + H(+). Activated by threonine and tyrosine phosphorylation. Activated by the MAP kinase kinases MKK2, MKK3, MKK4, MKK5, MKK7 and MKK9. Activated in response to touch, wounding, low temperature, low humidity, salt stress, hydrogen peroxide, ozone, ACC (an ethylene precursor), jasmonic acid (JA), mastoparan and UVC. Activated in response to elicitors: oligogalacturonides, hexameric chitin fragments, fungal xylanase, and the bacterial flagellin and harpin. Activated upon Pseudomonas syringae pv. tomato DC3000 infection. Repressed by the protein phosphatase 2C AP2C1 and the protein-tyrosine-phosphatases MKP1 and PTP1. Repressed by DSPTP1B/MKP2-mediated dephosphorylation. Activated by polarized BASL. Triggered by MKKK20 in response to various abiotic stresses, including osmotic stress, cold and reactive oxygen species (ROS). Activated by MKK5 in response to abscisic acid (ABA). Its function is as follows. Mitogen-activated protein kinase (MAPK) which regulates abscisic acid (ABA) responses in a MAPKKK20-MKK5-MPK6 cascade involved in root growth (e.g. root cell division and elongation) and stomatal response. Involved in oxidative stress-mediated signaling cascade (such as ozone). Involved in the innate immune MAP kinase signaling cascade (MEKK1, MKK4/MKK5 and MPK3/MPK6) downstream of bacterial flagellin receptor FLS2. May be involved in hypersensitive response (HR)-mediated signaling cascade by modulating LIP5 phosphorylation and subsequent multivesicular bodies (MVBs) trafficking. May phosphorylate regulators of WRKY transcription factors. Phosphorylates 1-aminocyclopropane-1-carboxylic acid synthases (ACS2 and ACS6) and may be involved in the regulation of bacterial elicitor flagellin-induced ethylene production. Regulates locally gene-mediated and basal resistance response to certain pathogens. May be involved in the cold and salinity stress-mediated MAP kinase signaling cascade (MEKK1, MKK1/MKK2 and MPK4/MPK6). MKK1-MPK6 module mediates abscisic acid (ABA)-dependent CAT1 expression with H(2)O(2) production and response to drought and salt stress. MKK1-MPK6 module is also involved in sugar signaling during the process of seed germination. MKK3-MPK6 module plays an important role in the jasmonate signal transduction pathway through the negative regulation of MYC2/JIN1 expression. MKK9-MPK3/MPK6 module phosphorylates and activates EIN3, leading to the promotion of EIN3-mediated transcription in ethylene signaling. MPK3/MPK6 cascade regulates camalexin synthesis through transcriptional regulation of the biosynthetic genes after pathogen infection. MKK9-MPK6 module positively regulates leaf senescence. YDA-MKK4/MKK5-MPK3/MPK6 module regulates stomatal cell fate before the guard mother cell (GMC) is specified. When activated, reinforces the feedback loop by phosphorylating BASL, and inhibits stomatal fate by phosphorylating SPCH. This MAPK cascade also functions downstream of the ER receptor in regulating coordinated local cell proliferation, which shapes the morphology of plant organs. The sequence is that of Mitogen-activated protein kinase 6 from Arabidopsis thaliana (Mouse-ear cress).